The primary structure comprises 200 residues: NAD(P)H-quinone oxidoreductase subunit 6, chloroplastic (200 aa).

Transmembrane regions (helical) follow at residues 13-33, 35-55, 64-84, 102-122, and 156-176; these read IIFF…VLLS, IVYS…LYFA, AQIL…VMLI, ITLA…LNTS, and LLPF…AIVI.

The protein belongs to the complex I subunit 6 family. NDH is composed of at least 16 different subunits, 5 of which are encoded in the nucleus.

It localises to the plastid. It is found in the chloroplast thylakoid membrane. The enzyme catalyses a plastoquinone + NADH + (n+1) H(+)(in) = a plastoquinol + NAD(+) + n H(+)(out). It carries out the reaction a plastoquinone + NADPH + (n+1) H(+)(in) = a plastoquinol + NADP(+) + n H(+)(out). In terms of biological role, NDH shuttles electrons from NAD(P)H:plastoquinone, via FMN and iron-sulfur (Fe-S) centers, to quinones in the photosynthetic chain and possibly in a chloroplast respiratory chain. The immediate electron acceptor for the enzyme in this species is believed to be plastoquinone. Couples the redox reaction to proton translocation, and thus conserves the redox energy in a proton gradient. This chain is NAD(P)H-quinone oxidoreductase subunit 6, chloroplastic (ndhG), found in Physcomitrium patens (Spreading-leaved earth moss).